The sequence spans 203 residues: Small ribosomal subunit protein uS4 (203 aa).

In terms of domain architecture, S4 RNA-binding spans 93-156 (RRLDNVVYRL…MKVPAILEAV (64 aa)).

Belongs to the universal ribosomal protein uS4 family. Part of the 30S ribosomal subunit. Contacts protein S5. The interaction surface between S4 and S5 is involved in control of translational fidelity.

Functionally, one of the primary rRNA binding proteins, it binds directly to 16S rRNA where it nucleates assembly of the body of the 30S subunit. Its function is as follows. With S5 and S12 plays an important role in translational accuracy. The protein is Small ribosomal subunit protein uS4 of Streptococcus pyogenes serotype M4 (strain MGAS10750).